The chain runs to 70 residues: Small ribosomal subunit protein bS21 (70 aa).

The protein belongs to the bacterial ribosomal protein bS21 family.

This is Small ribosomal subunit protein bS21 from Chromobacterium violaceum (strain ATCC 12472 / DSM 30191 / JCM 1249 / CCUG 213 / NBRC 12614 / NCIMB 9131 / NCTC 9757 / MK).